The primary structure comprises 985 residues: Translation initiation factor IF-2 (985 aa).

Composition is skewed to basic and acidic residues over residues 49–58 (QYGKKQEKSS), 65–89 (IQRE…RPDN), and 99–113 (VPNR…DKAK). Residues 49–401 (QYGKKQEKSS…QQSAPPPILD (353 aa)) form a disordered region. Polar residues predominate over residues 125-136 (SKTTTNSENEQT). The span at 137–162 (APRQGSAQQSGQGRPQANRPQGSQGR) shows a compositional bias: low complexity. 2 stretches are compositionally biased toward gly residues: residues 180 to 246 (PQGG…GQGR) and 288 to 324 (PQGG…GAGR). The segment covering 349–377 (KAPDKTKGDRRKNYEKDGKWADGQIEKNK) has biased composition (basic and acidic residues). Positions 378–391 (LFKGRNNKNKKRQH) are enriched in basic residues. Residues 485–654 (LRPPVVTIMG…LLVAEVHELK (170 aa)) enclose the tr-type G domain. Positions 494–501 (GHVDHGKT) are G1. 494-501 (GHVDHGKT) serves as a coordination point for GTP. Positions 519–523 (GITQH) are G2. The tract at residues 540–543 (DTPG) is G3. GTP contacts are provided by residues 540-544 (DTPGH) and 594-597 (NKMD). The interval 594–597 (NKMD) is G4. The interval 630 to 632 (SAK) is G5.

It belongs to the TRAFAC class translation factor GTPase superfamily. Classic translation factor GTPase family. IF-2 subfamily.

The protein localises to the cytoplasm. In terms of biological role, one of the essential components for the initiation of protein synthesis. Protects formylmethionyl-tRNA from spontaneous hydrolysis and promotes its binding to the 30S ribosomal subunits. Also involved in the hydrolysis of GTP during the formation of the 70S ribosomal complex. In Desulforamulus reducens (strain ATCC BAA-1160 / DSM 100696 / MI-1) (Desulfotomaculum reducens), this protein is Translation initiation factor IF-2.